A 657-amino-acid polypeptide reads, in one-letter code: 2',3'-cyclic-nucleotide 2'-phosphodiesterase/3'-nucleotidase (657 aa).

The first 26 residues, 1–26, serve as a signal peptide directing secretion; it reads MMNRRHFIQISATSILALSANRFAMA. 7 residues coordinate a divalent metal cation: Asp41, His43, Asp86, Asn126, His235, His267, and His269. Substrate-binding positions include Tyr450 and 554–559; that span reads YRAYGN.

This sequence belongs to the 5'-nucleotidase family. Requires a divalent metal cation as cofactor.

The protein localises to the periplasm. The catalysed reaction is a nucleoside 2',3'-cyclic phosphate + H2O = a nucleoside 3'-phosphate + H(+). It catalyses the reaction a ribonucleoside 3'-phosphate + H2O = a ribonucleoside + phosphate. Functionally, this bifunctional enzyme catalyzes two consecutive reactions during ribonucleic acid degradation. Converts a 2',3'-cyclic nucleotide to a 3'-nucleotide and then the 3'-nucleotide to the corresponding nucleoside and phosphate. The protein is 2',3'-cyclic-nucleotide 2'-phosphodiesterase/3'-nucleotidase (cpdB) of Haemophilus influenzae (strain ATCC 51907 / DSM 11121 / KW20 / Rd).